The sequence spans 1144 residues: Ribonucleoside-diphosphate reductase large subunit (1144 aa).

The disordered stretch occupies residues 1–33 (MANRPAASALAGARSPSERQEPREPEVAPPGGD). Positions 16–26 (PSERQEPREPE) are enriched in basic and acidic residues. The RIP homotypic interaction motif (RHIM) motif lies at 55–75 (AYRISDSSFVQCGSNCSMIID). A disordered region spans residues 118–324 (SGPSATTSVG…TDPGYPVPLE (207 aa)). The span at 119 to 132 (GPSATTSVGTQTSG) shows a compositional bias: polar residues. Residues 141-159 (TPEPQGPQAVPPPPPPPFP) are compositionally biased toward pro residues. The span at 164–179 (CCARRDARGGAEKDVG) shows a compositional bias: basic and acidic residues. Residues 192-204 (SETEDSDSSDEDT) are compositionally biased toward acidic residues. Low complexity-rich tracts occupy residues 205 to 216 (GSGSETLSRSSS) and 279 to 305 (GSAT…DVAP). Substrate contacts are provided by residues Thr573, 588 to 589 (SC), Gly619, 798 to 802 (NLCTE), and 975 to 979 (PTAAS). Cys589 and Cys815 are disulfide-bonded. Asn798 (proton acceptor) is an active-site residue. Cys800 (cysteine radical intermediate) is an active-site residue. Residue Glu802 is the Proton acceptor of the active site.

The protein belongs to the ribonucleoside diphosphate reductase large chain family. In terms of assembly, heterotetramer composed of a homodimer of the large subunit (R1) and a homodimer of the small subunit (R2). Larger multisubunit protein complex are also active, composed of (R1)n(R2)n. May self-assemble (via RIP homotypic interaction motif/RHIM) into homomeric fibrillar amyloid structures. Interacts (via RHIM) with human RIPK1 (via RHIM). Interacts (via RHIM) with human RIPK3 (via RHIM). May interact (via RHIM) with human ZBP1 (via RHIM). Interacts (via C-terminus) with host CASP8.

The enzyme catalyses a 2'-deoxyribonucleoside 5'-diphosphate + [thioredoxin]-disulfide + H2O = a ribonucleoside 5'-diphosphate + [thioredoxin]-dithiol. In terms of biological role, ribonucleoside-diphosphate reductase holoenzyme that provides the precursors necessary for viral DNA synthesis. Allows virus growth in non-dividing cells, as well as reactivation from latency in infected hosts. Catalyzes the biosynthesis of deoxyribonucleotides from the corresponding ribonucleotides. The N-terminal region confers antiapoptotic activity in differentiated cells such as neurons and is important for viral reactivation to increase neural survivability. Prevents host necroptosis by targeting host RIPK1 and RIPK3, thereby hampering the formation of necroptotic RIPK1-RIPK3 complexes. May form hetero-amyloid structures with host proteins RIPK3 or ZBP1, thereby preventing RIPK3- and ZBP1-mediated necroptosis. In addition, inhibits extrinsic apoptosis by targeting host CASP8. The protein is Ribonucleoside-diphosphate reductase large subunit of Homo sapiens (Human).